Consider the following 241-residue polypeptide: Uracil-DNA glycosylase (241 aa).

Asp71 functions as the Proton acceptor in the catalytic mechanism.

It belongs to the uracil-DNA glycosylase (UDG) superfamily. UNG family.

It localises to the cytoplasm. It catalyses the reaction Hydrolyzes single-stranded DNA or mismatched double-stranded DNA and polynucleotides, releasing free uracil.. Excises uracil residues from the DNA which can arise as a result of misincorporation of dUMP residues by DNA polymerase or due to deamination of cytosine. The chain is Uracil-DNA glycosylase from Xanthomonas campestris pv. campestris (strain 8004).